Reading from the N-terminus, the 1230-residue chain is Soluble starch synthase 3, chloroplastic/amyloplastic (1230 aa).

A chloroplast-targeting transit peptide spans 1-60 (MDVPFPLHRSLSCTSVSNAITHLKIKPILGFVSHGTTSLSVQSSSWRKDGMVTGVSFSIC). The segment at 66-189 (RRRRKVSTPR…KDAVKLNKSK (124 aa)) is disordered. A compositionally biased stretch (basic and acidic residues) spans 124–145 (VEARVETSDDDTKGVVRDHKFL). The segment covering 152-170 (NGSTKSISMSPVRVSSQFV) has biased composition (polar residues). Residues 177–189 (GDDKDAVKLNKSK) are compositionally biased toward basic and acidic residues. Residue Lys-794 coordinates ADP-alpha-D-glucose.

The protein belongs to the glycosyltransferase 1 family. Bacterial/plant glycogen synthase subfamily. Tuber, sink and source leaves.

Its subcellular location is the plastid. It is found in the chloroplast. It localises to the amyloplast. The enzyme catalyses [(1-&gt;4)-alpha-D-glucosyl](n) + ADP-alpha-D-glucose = [(1-&gt;4)-alpha-D-glucosyl](n+1) + ADP + H(+). The protein operates within glycan biosynthesis; starch biosynthesis. Functionally, may account for most of the soluble starch synthase activity in the tubers. Contributes only a tiny percentage of the granule-bound activity, but may also contribute to the deposition of transient starch in chloroplasts of leaves. The sequence is that of Soluble starch synthase 3, chloroplastic/amyloplastic (SS3) from Solanum tuberosum (Potato).